Reading from the N-terminus, the 217-residue chain is Ras-related protein Rab-39A (217 aa).

6 residues coordinate GTP: Ser17, Gly20, Lys21, Ser22, Cys23, and Thr44. Ser22 is a binding site for Mg(2+). A switch-I region spans residues 39–47; sequence PACDPTVGV. Residues Thr44 and Asp68 each coordinate Mg(2+). GTP is bound by residues Gly71, His127, Lys128, Asp130, Ala158, and Lys159. Residues 71-87 form a switch-II region; the sequence is GQERFRSITRSYYRNSV. Residues Cys215 and Cys217 are each lipidated (S-geranylgeranyl cysteine). Cys217 carries the cysteine methyl ester modification.

The protein belongs to the small GTPase superfamily. Rab family. Interacts (GDP-bound) with C9orf72; C9orf72 acts as a GEF for RAB39A. Interacts (GTP-bound) with HOPS complex components VPS39 and VPS41, and STX17; interaction between HOPS components and RAB39A contributes to obtaining a functional HOPS complex that promotes membrane fusion driven by STX17-SNAP29-VAMP8. Interacts with BECN1. Probably associates with the PI3K (PI3KC3/PI3K-III/class III phosphatidylinositol 3-kinase) complex. Interacts with UACA. Interacts with isoform a of RASSF1. Does not interact with isoform c of RASSF1. Mg(2+) serves as cofactor. In terms of processing, prenylated. Prenylation is required for association with cellular membranes.

It is found in the cell membrane. The protein localises to the cytoplasmic vesicle. Its subcellular location is the phagosome membrane. It localises to the late endosome membrane. The protein resides in the lysosome membrane. It is found in the autolysosome membrane. It carries out the reaction GTP + H2O = GDP + phosphate + H(+). Regulated by guanine nucleotide exchange factors (GEFs) including c9Orf72, which promote the exchange of bound GDP for free GTP. Regulated by GTPase activating proteins (GAPs) which increase the GTP hydrolysis activity. Inhibited by GDP dissociation inhibitors (GDIs). Its function is as follows. The small GTPases Rab are key regulators of intracellular membrane trafficking, from the formation of transport vesicles to their fusion with membranes. Rabs cycle between an inactive GDP-bound form and an active GTP-bound form that is able to recruit to membranes different sets of downstream effectors directly responsible for vesicle formation, movement, tethering and fusion. RAB39A regulates autophagosome-lysosome fusion via recruitment of the HOPS endosomal tethering complex onto lysosomes; this process involves lysosomal RAB39A and autophagosomal RAB2A recruitment of HOPS subcomplexes VPS41-VPS16-VPS18-VPS33A and VPS39-VPS11, respectively, which assemble into a functional complex to mediate membrane tethering and SNAREs-driven membrane fusion. Also negatively regulates lipopolysaccharide (LPS)-induced autophagosome formation in macrophages, possibly by implicating PI3K. Promotes the delivery of MHC-I molecules from the ER to phagosomes and the generation of peptide-loaded MHC-I complexes in phagosomes, thus enhancing antigen cross-presentation by dendritic cells. Plays a role in the maturation and acidification of phagosomes that engulf pathogens, such as S.aureus and M.tuberculosis. Plays a role in the fusion of phagosomes with lysosomes. May be involved in multiple neurite formation. This is Ras-related protein Rab-39A from Mus musculus (Mouse).